The sequence spans 341 residues: uncharacterized protein (341 aa).

This is an uncharacterized protein from Methanocaldococcus jannaschii (strain ATCC 43067 / DSM 2661 / JAL-1 / JCM 10045 / NBRC 100440) (Methanococcus jannaschii).